A 323-amino-acid chain; its full sequence is Mitochondrial glutamate carrier 1 (323 aa).

3 Solcar repeats span residues I6–Q93, L101–L214, and S223–E312. 6 helical membrane-spanning segments follow: residues L12–A32, Y62–I82, M107–L127, G189–A209, S223–V243, and A292–E312.

This sequence belongs to the mitochondrial carrier (TC 2.A.29) family. Detected in insulin-secreting beta-cells and pancreatic islets (at the protein level).

It is found in the mitochondrion inner membrane. The catalysed reaction is L-glutamate(in) + H(+)(in) = L-glutamate(out) + H(+)(out). Functionally, mitochondrial glutamate/H(+) symporter. Responsible for the transport of glutamate from the cytosol into the mitochondrial matrix with the concomitant import of a proton. Plays a role in the control of glucose-stimulated insulin secretion. This is Mitochondrial glutamate carrier 1 from Rattus norvegicus (Rat).